The chain runs to 388 residues: Dual-specificity RNA methyltransferase RlmN (388 aa).

Residue Glu109 is the Proton acceptor of the active site. In terms of domain architecture, Radical SAM core spans Glu115 to Asp354. Cys122 and Cys359 are oxidised to a cystine. [4Fe-4S] cluster-binding residues include Cys129, Cys133, and Cys136. Residues Gly183–Glu184, Ser215, Ser237–His239, and Asn316 contribute to the S-adenosyl-L-methionine site. Catalysis depends on Cys359, which acts as the S-methylcysteine intermediate.

It belongs to the radical SAM superfamily. RlmN family. Requires [4Fe-4S] cluster as cofactor.

It localises to the cytoplasm. The enzyme catalyses adenosine(2503) in 23S rRNA + 2 reduced [2Fe-2S]-[ferredoxin] + 2 S-adenosyl-L-methionine = 2-methyladenosine(2503) in 23S rRNA + 5'-deoxyadenosine + L-methionine + 2 oxidized [2Fe-2S]-[ferredoxin] + S-adenosyl-L-homocysteine. It catalyses the reaction adenosine(37) in tRNA + 2 reduced [2Fe-2S]-[ferredoxin] + 2 S-adenosyl-L-methionine = 2-methyladenosine(37) in tRNA + 5'-deoxyadenosine + L-methionine + 2 oxidized [2Fe-2S]-[ferredoxin] + S-adenosyl-L-homocysteine. Functionally, specifically methylates position 2 of adenine 2503 in 23S rRNA and position 2 of adenine 37 in tRNAs. m2A2503 modification seems to play a crucial role in the proofreading step occurring at the peptidyl transferase center and thus would serve to optimize ribosomal fidelity. This Citrobacter koseri (strain ATCC BAA-895 / CDC 4225-83 / SGSC4696) protein is Dual-specificity RNA methyltransferase RlmN.